We begin with the raw amino-acid sequence, 1437 residues long: Envelopment polyprotein (1437 aa).

An N-terminal signal peptide occupies residues 1 to 21; that stretch reads MAISTSLLIVALLIKLCLVNT. Residues 22–207 lie on the Lumenal side of the membrane; the sequence is APPISKCFQD…GYMASSICQN (186 aa). N-linked (GlcNAc...) asparagine; by host glycosylation is found at Asn65 and Asn88. The chain crosses the membrane as a helical span at residues 208 to 228; that stretch reads IELIIIIILTLAIFIFMCIIT. The Cytoplasmic segment spans residues 229 to 312; it reads RTYICYLMLP…RVARSLCKSK (84 aa). A helical transmembrane segment spans residues 313 to 333; the sequence is GSSLVISILTAMLILSFITPL. The Lumenal segment spans residues 334–373; it reads EAMTTNYPDDKKFTLKEVNDIVLGRDMEQELKSSILILMS. A helical transmembrane segment spans residues 374 to 394; it reads ICGIGIILIFFGLTVLLEIVL. Over 395–460 the chain is Cytoplasmic; it reads ELIAKRSTIF…TYYIKIRNLK (66 aa). A helical transmembrane segment spans residues 461-481; it reads LIMLIFSIVILMQNATMLVVA. At 482–1391 the chain is on the lumenal side; sequence GENCWTNTEI…EPLNNFFGNY (910 aa). N-linked (GlcNAc...) asparagine; by host glycans are attached at residues Asn627 and Asn1173. The chain crosses the membrane as a helical span at residues 1392 to 1412; it reads LNMFLYILGGIILLFLALYIL. Topologically, residues 1413–1437 are cytoplasmic; it reads MPMCARLRDELKRNERLHQMEMKKR.

The protein belongs to the orthobunyavirus envelope glycoprotein family. In terms of assembly, glycoprotein C and Glycoprotein N interact with each other. Post-translationally, specific enzymatic cleavages in vivo yield mature proteins including nonstructural protein NSm, Glycoprotein C, and Glycoprotein N.

Its subcellular location is the virion membrane. The protein localises to the host Golgi apparatus membrane. The protein resides in the host endoplasmic reticulum membrane. In terms of biological role, glycoprotein C and Glycoprotein N interact with each other and are present at the surface of the virion. They are able to attach the virion to a cell receptor and to promote fusion of membranes after endocytosis of the virion. In Culex, this protein is Envelopment polyprotein (GP).